The chain runs to 273 residues: MGSGWVPWVVALLVNLTRLDSSMTQGTDSPEDFVIQAKADCYFTNGTEKVQFVVRFIFNLEEYVRFDSDVGMFVALTKLGQPDAEQWNSRLDLLERSRQAVDGVCRHNYRLGAPFTVGRKVQPEVTVYPERTPLLHQHNLLHCSVTGFYPGDIKIRWFLNGQEERARVMSTGPIRNGDWTFQTVVMLEMTPELGHVYTCLVDHSSLLSPVSVEWRAQSEYSWKKMLSGIAAFLLGLIFLLVGIVIQLRAQKGYVRTQMSGNEVSRAVLLPQSC.

The N-terminal stretch at 1–26 (MGSGWVPWVVALLVNLTRLDSSMTQG) is a signal peptide. Residues 27–120 (TDSPEDFVIQ…LGAPFTVGRK (94 aa)) form a beta-1 region. At 27-224 (TDSPEDFVIQ…RAQSEYSWKK (198 aa)) the chain is on the extracellular side. Cystine bridges form between Cys-41–Cys-105 and Cys-143–Cys-199. An N-linked (GlcNAc...) asparagine glycan is attached at Asn-45. A beta-2 region spans residues 121–214 (VQPEVTVYPE…SLLSPVSVEW (94 aa)). The region spanning 123–213 (PEVTVYPERT…SSLLSPVSVE (91 aa)) is the Ig-like C1-type domain. The tract at residues 215-224 (RAQSEYSWKK) is connecting peptide. A helical membrane pass occupies residues 225–245 (MLSGIAAFLLGLIFLLVGIVI). The Cytoplasmic segment spans residues 246-273 (QLRAQKGYVRTQMSGNEVSRAVLLPQSC).

This sequence belongs to the MHC class II family. Heterodimer of an alpha chain (DOA) and a beta chain (DOB). Forms a heterotetrameric complex with an HLA-DM molecule during intracellular transport in endosomal/lysosomal compartments in B-cells.

It is found in the endosome membrane. The protein resides in the lysosome membrane. Its function is as follows. Important modulator in the HLA class II restricted antigen presentation pathway by interaction with the HLA-DM molecule in B-cells. Modifies peptide exchange activity of HLA-DM. The polypeptide is Patr class II histocompatibility antigen, DO beta chain (Patr-DOB) (Pan troglodytes (Chimpanzee)).